The following is a 104-amino-acid chain: Cell division protein FtsL (104 aa).

Residues 1–19 (MSTPNTHLLCLIATDLRKH) lie on the Cytoplasmic side of the membrane. The chain crosses the membrane as a helical span at residues 20 to 39 (FFAVLVGMLIVCSAIYNVYT). The Periplasmic segment spans residues 40–104 (THKTRGLVTQ…KKNSVLVELR (65 aa)).

The protein belongs to the FtsL family. As to quaternary structure, part of a complex composed of FtsB, FtsL and FtsQ.

Its subcellular location is the cell inner membrane. Functionally, essential cell division protein. May link together the upstream cell division proteins, which are predominantly cytoplasmic, with the downstream cell division proteins, which are predominantly periplasmic. The protein is Cell division protein FtsL of Psychromonas ingrahamii (strain DSM 17664 / CCUG 51855 / 37).